Consider the following 313-residue polypeptide: Ribosomal RNA small subunit methyltransferase H (313 aa).

S-adenosyl-L-methionine-binding positions include 35–37, Asp55, Phe79, Asp101, and Gln108; that span reads GGH.

This sequence belongs to the methyltransferase superfamily. RsmH family.

The protein localises to the cytoplasm. It carries out the reaction cytidine(1402) in 16S rRNA + S-adenosyl-L-methionine = N(4)-methylcytidine(1402) in 16S rRNA + S-adenosyl-L-homocysteine + H(+). Its function is as follows. Specifically methylates the N4 position of cytidine in position 1402 (C1402) of 16S rRNA. This Shigella flexneri serotype 5b (strain 8401) protein is Ribosomal RNA small subunit methyltransferase H.